The sequence spans 618 residues: Dihydroxy-acid dehydratase (618 aa).

D81 contacts Mg(2+). C122 provides a ligand contact to [2Fe-2S] cluster. Mg(2+) is bound by residues D123 and K124. K124 carries the N6-carboxylysine modification. A [2Fe-2S] cluster-binding site is contributed by C195. Residue E491 coordinates Mg(2+). The active-site Proton acceptor is the S517.

The protein belongs to the IlvD/Edd family. Homodimer. [2Fe-2S] cluster is required as a cofactor. Requires Mg(2+) as cofactor.

It carries out the reaction (2R)-2,3-dihydroxy-3-methylbutanoate = 3-methyl-2-oxobutanoate + H2O. It catalyses the reaction (2R,3R)-2,3-dihydroxy-3-methylpentanoate = (S)-3-methyl-2-oxopentanoate + H2O. Its pathway is amino-acid biosynthesis; L-isoleucine biosynthesis; L-isoleucine from 2-oxobutanoate: step 3/4. It participates in amino-acid biosynthesis; L-valine biosynthesis; L-valine from pyruvate: step 3/4. Its function is as follows. Functions in the biosynthesis of branched-chain amino acids. Catalyzes the dehydration of (2R,3R)-2,3-dihydroxy-3-methylpentanoate (2,3-dihydroxy-3-methylvalerate) into 2-oxo-3-methylpentanoate (2-oxo-3-methylvalerate) and of (2R)-2,3-dihydroxy-3-methylbutanoate (2,3-dihydroxyisovalerate) into 2-oxo-3-methylbutanoate (2-oxoisovalerate), the penultimate precursor to L-isoleucine and L-valine, respectively. The polypeptide is Dihydroxy-acid dehydratase (Dechloromonas aromatica (strain RCB)).